The following is a 248-amino-acid chain: MTTGKLILLRHGQSEWNASNQFTGWVDVNLTEKGEAEAKRGGELLKAQGVLPSVVYTSLLRRAIRTANIALNAADRHWIPVVRDWRLNERHYGALQGLNKAETKEKYGDEQFMAWRRSYGTPPPELEDSSEFSQANDPRYANLDVVPRTECLKDVVERFVPYFKEEILPRVKNGETVLIAAHGNSLRALVKHLDNISDADIAELNIPTGIPLVYELDEAGTVLNPGGTYLDPEAAAAGAAAVAAQGAK.

Substrate contacts are provided by residues 10–17 (RHGQSEWN), 23–24 (TG), Arg62, 89–92 (ERHY), Lys100, 116–117 (RR), and 183–184 (GN). The active-site Tele-phosphohistidine intermediate is His11. Glu89 functions as the Proton donor/acceptor in the catalytic mechanism.

Belongs to the phosphoglycerate mutase family. BPG-dependent PGAM subfamily.

It carries out the reaction (2R)-2-phosphoglycerate = (2R)-3-phosphoglycerate. It participates in carbohydrate degradation; glycolysis; pyruvate from D-glyceraldehyde 3-phosphate: step 3/5. Its function is as follows. Catalyzes the interconversion of 2-phosphoglycerate and 3-phosphoglycerate. This chain is 2,3-bisphosphoglycerate-dependent phosphoglycerate mutase, found in Corynebacterium diphtheriae (strain ATCC 700971 / NCTC 13129 / Biotype gravis).